The following is a 321-amino-acid chain: Probable arabinan endo-1,5-alpha-L-arabinosidase C (321 aa).

An N-terminal signal peptide occupies residues 1–18 (MYLYTLILLFLASANVNA). The active-site Proton acceptor is aspartate 33. N-linked (GlcNAc...) asparagine glycosylation is present at asparagine 192. The Proton donor role is filled by glutamate 200. An N-linked (GlcNAc...) asparagine glycan is attached at asparagine 224.

It belongs to the glycosyl hydrolase 43 family.

It is found in the secreted. The catalysed reaction is Endohydrolysis of (1-&gt;5)-alpha-arabinofuranosidic linkages in (1-&gt;5)-arabinans.. It functions in the pathway glycan metabolism; L-arabinan degradation. Its function is as follows. Endo-1,5-alpha-L-arabinanase involved in degradation of pectin. Its preferred substrate is linear 1,5-alpha-L-arabinan. The protein is Probable arabinan endo-1,5-alpha-L-arabinosidase C (abnC) of Aspergillus fumigatus (strain CBS 144.89 / FGSC A1163 / CEA10) (Neosartorya fumigata).